Reading from the N-terminus, the 722-residue chain is Tegument protein UL46 (722 aa).

The segment at 423–534 (RLAASGPPGG…AAAARPLAAQ (112 aa)) is disordered. 2 stretches are compositionally biased toward basic and acidic residues: residues 440–451 (CRDKIQRTRRDN) and 474–491 (HREDLPEPPHVDAADRGP). Positions 510–522 (PRLPPRNPAPPEQ) are enriched in pro residues. Residues 523 to 534 (RPAAAARPLAAQ) show a composition bias toward low complexity.

Belongs to the herpesviridae HHV-1 VP11/12 protein family. Interacts with VP16. Interacts with host LCK, PIK3R1, SHC1 AND GRB2; these interactions promote the activation of the PI3K/AKT pathway. Interacts with host YWHAB. Interacts with ICP0; this interaction targets UL46 for degradation by the proteasome. Phosphorylated by host LCK. The phosphorylation seems to be lymphocyte-specific.

The protein resides in the virion tegument. It is found in the host cell membrane. Functionally, plays a role in the activation of the host PI3K/AKT pathway to promote cell survival. Interacts with and activates host LCK and thereby recruits downstream partners SHC1, GRB2 and PI3KR1 in order to activate the PI3K pathway by phosphorylating host AKT on its activating residues. This mechanism is inhibited by the viral protein US3 that instead promotes incorporation of UL46 into virions. This chain is Tegument protein UL46, found in Homo sapiens (Human).